Here is a 579-residue protein sequence, read N- to C-terminus: Protein inscuteable homolog (579 aa).

The segment at 74–89 (SVQRWMEDLKLMTECE) is important for interaction with GPSM2. The short motif at 576-579 (ESFV) is the PDZ-binding element.

In terms of assembly, interacts with ALS2CR19/PAR3B and GPSM1/AGS3. Interacts with F2RL2/PAR3. Interacts with GPSM2/LGN (via TPR repeat region). As to expression, expressed in brain, kidney, liver, testis and skin.

Its subcellular location is the cytoplasm. It is found in the cell cortex. In terms of biological role, may function as an adapter linking the Par3 complex to the GPSM1/GPSM2 complex. Involved in spindle orientation during mitosis. May regulate cell proliferation and differentiation in the developing nervous system. May play a role in the asymmetric division of fibroblasts and participate in the process of stratification of the squamous epithelium. The sequence is that of Protein inscuteable homolog (Insc) from Mus musculus (Mouse).